Here is a 264-residue protein sequence, read N- to C-terminus: MLFDWFTFWAQLLNFLILVWLLKRFLYRPVLEAIDEREKKISGELRDADEGRKQAEQAIREWQEKMSRLDAQAAGMLETARKEAGEEKKRLQGEARREYDELRGRLRESLHEEQAALGRTIAGRIRAEVFRVSDSVLNSLADSGLQAQMARAFSGRLSEGGTEVEELLKSGGTPLVLRSGFEMGEEEKELVRKTLADRFGYKGRLDFMTEESYRGGIALEQGGRSIEWSVNSRLEAIDEASSALLDGPDDEMNEEEGHAGKDAD.

The chain crosses the membrane as a helical span at residues 2 to 22 (LFDWFTFWAQLLNFLILVWLL). Residues 240–264 (ASSALLDGPDDEMNEEEGHAGKDAD) are disordered. Positions 255–264 (EEGHAGKDAD) are enriched in basic and acidic residues.

It belongs to the ATPase B chain family. As to quaternary structure, F-type ATPases have 2 components, F(1) - the catalytic core - and F(0) - the membrane proton channel. F(1) has five subunits: alpha(3), beta(3), gamma(1), delta(1), epsilon(1). F(0) has four main subunits: a(1), b(2) and c(10-14). The alpha and beta chains form an alternating ring which encloses part of the gamma chain. F(1) is attached to F(0) by a central stalk formed by the gamma and epsilon chains, while a peripheral stalk is formed by the delta and b chains.

It is found in the cell inner membrane. F(1)F(0) ATP synthase produces ATP from ADP in the presence of a proton or sodium gradient. F-type ATPases consist of two structural domains, F(1) containing the extramembraneous catalytic core and F(0) containing the membrane proton channel, linked together by a central stalk and a peripheral stalk. During catalysis, ATP synthesis in the catalytic domain of F(1) is coupled via a rotary mechanism of the central stalk subunits to proton translocation. Functionally, component of the F(0) channel, it forms part of the peripheral stalk, linking F(1) to F(0). The protein is ATP synthase subunit b 1 of Chlorobium luteolum (strain DSM 273 / BCRC 81028 / 2530) (Pelodictyon luteolum).